Reading from the N-terminus, the 130-residue chain is Large ribosomal subunit protein bL12 (130 aa).

Belongs to the bacterial ribosomal protein bL12 family. As to quaternary structure, homodimer. Part of the ribosomal stalk of the 50S ribosomal subunit. Forms a multimeric L10(L12)X complex, where L10 forms an elongated spine to which 2 to 4 L12 dimers bind in a sequential fashion. Binds GTP-bound translation factors.

Forms part of the ribosomal stalk which helps the ribosome interact with GTP-bound translation factors. Is thus essential for accurate translation. The protein is Large ribosomal subunit protein bL12 of Herpetosiphon aurantiacus (strain ATCC 23779 / DSM 785 / 114-95).